The following is a 236-amino-acid chain: 15,16-dihydrobiliverdin:ferredoxin oxidoreductase (236 aa).

This sequence belongs to the HY2 family.

It catalyses the reaction 15,16-dihydrobiliverdin + oxidized 2[4Fe-4S]-[ferredoxin] = biliverdin IXalpha + reduced 2[4Fe-4S]-[ferredoxin] + 2 H(+). Functionally, catalyzes the two-electron reduction of biliverdin IX-alpha at the C15 methine bridge. The polypeptide is 15,16-dihydrobiliverdin:ferredoxin oxidoreductase (Prochlorococcus marinus (strain AS9601)).